A 140-amino-acid chain; its full sequence is Protein S40-1 (140 aa).

Residues 16-58 (YFPIRRREDGNEKENNRPVDFRENSERVWNKSSRRSKTTPLPS) are disordered. Residues 20–44 (RRREDGNEKENNRPVDFRENSERVW) show a composition bias toward basic and acidic residues.

The protein belongs to the senescence regulator S40 family.

The protein resides in the cytoplasm. This Arabidopsis thaliana (Mouse-ear cress) protein is Protein S40-1.